The following is a 601-amino-acid chain: NADPH--cytochrome P450 reductase (601 aa).

The Flavodoxin-like domain occupies 25–169 (IVVFYGSQTG…DFVTWREQFW (145 aa)). Residues 31–36 (SQTGTG), 83–86 (ATYG), 118–127 (LGDKTYEHYN), and Asp153 each bind FMN. Residues 224–425 (KNPFLAPVTV…ICAVLVEYXT (202 aa)) form the FAD-binding FR-type domain. Residues 399–402 (RYYS), 417–419 (CAV), Tyr423, and 427–430 (GVAT) contribute to the FAD site. NADP(+) is bound by residues Thr458, 519-520 (SR), 525-529 (KVYVQ), and Asp562. Position 600 (Trp600) interacts with FAD.

It belongs to the NADPH--cytochrome P450 reductase family. This sequence in the N-terminal section; belongs to the flavodoxin family. The protein in the C-terminal section; belongs to the flavoprotein pyridine nucleotide cytochrome reductase family. The cofactor is FAD. Requires FMN as cofactor.

Its subcellular location is the endoplasmic reticulum membrane. It carries out the reaction 2 oxidized [cytochrome P450] + NADPH = 2 reduced [cytochrome P450] + NADP(+) + H(+). In terms of biological role, this enzyme is required for electron transfer from NADP to cytochrome P450 in microsomes. It can also provide electron transfer to heme oxygenase and cytochrome B5. This Salmo trutta (Brown trout) protein is NADPH--cytochrome P450 reductase.